A 277-amino-acid polypeptide reads, in one-letter code: Shikimate dehydrogenase (NADP(+)) (277 aa).

Shikimate contacts are provided by residues 17-19 and T64; that span reads SRS. The Proton acceptor role is filled by K68. Residues N88 and D103 each contribute to the shikimate site. NADP(+) contacts are provided by residues 128–132, 152–157, and L217; these read GAGGS and NRTLDR. Y219 is a shikimate binding site. An NADP(+)-binding site is contributed by G240.

Belongs to the shikimate dehydrogenase family. In terms of assembly, homodimer.

The enzyme catalyses shikimate + NADP(+) = 3-dehydroshikimate + NADPH + H(+). The protein operates within metabolic intermediate biosynthesis; chorismate biosynthesis; chorismate from D-erythrose 4-phosphate and phosphoenolpyruvate: step 4/7. Its function is as follows. Involved in the biosynthesis of the chorismate, which leads to the biosynthesis of aromatic amino acids. Catalyzes the reversible NADPH linked reduction of 3-dehydroshikimate (DHSA) to yield shikimate (SA). The chain is Shikimate dehydrogenase (NADP(+)) from Rhodopseudomonas palustris (strain BisB18).